The primary structure comprises 239 residues: Adapter protein MecA (239 aa).

Residues 118-128 (EQRTKEKEAQG) are compositionally biased toward basic and acidic residues. The disordered stretch occupies residues 118–137 (EQRTKEKEAQGSKRQKSSAR).

It belongs to the MecA family. In terms of assembly, homodimer.

Functionally, enables the recognition and targeting of unfolded and aggregated proteins to the ClpC protease or to other proteins involved in proteolysis. This chain is Adapter protein MecA, found in Staphylococcus aureus (strain COL).